We begin with the raw amino-acid sequence, 249 residues long: 15,16-dihydrobiliverdin:ferredoxin oxidoreductase (249 aa).

It belongs to the HY2 family.

It catalyses the reaction 15,16-dihydrobiliverdin + oxidized 2[4Fe-4S]-[ferredoxin] = biliverdin IXalpha + reduced 2[4Fe-4S]-[ferredoxin] + 2 H(+). In terms of biological role, catalyzes the two-electron reduction of biliverdin IX-alpha at the C15 methine bridge. The polypeptide is 15,16-dihydrobiliverdin:ferredoxin oxidoreductase (Prochlorococcus marinus (strain MIT 9303)).